A 134-amino-acid chain; its full sequence is Small ribosomal subunit protein bS6 (134 aa).

Basic and acidic residues predominate over residues 113 to 122; the sequence is NRDIKEKEQP. The disordered stretch occupies residues 113–134; the sequence is NRDIKEKEQPSESNVDADLKVN.

It belongs to the bacterial ribosomal protein bS6 family.

Functionally, binds together with bS18 to 16S ribosomal RNA. The protein is Small ribosomal subunit protein bS6 of Borrelia duttonii (strain Ly).